A 270-amino-acid chain; its full sequence is MPELPEVETTVRGLATVLDGQVIRRVAVNRADLRRPFPEDLAQALTGARVTGMGRRAKYGLIHTDRERTMVFHLGMSGRWRIDPEDIGKHDHLVLETGEGRVLSLNDARRFGSVDLVDTGRLEEWPPFAALGPEPLGPGLKARHLAKAFEGRIAAVKLLLLDQQIVAGLGNIYVCEALYRARIHPEREGGKVSARALGLLVPAIRAVLEESIAAGGSTLRDYARPDGELGYFAKDWRVYGREGEPCQCGGVVKRIVQGGRSTFFCPRCQK.

The active-site Schiff-base intermediate with DNA is Pro-2. The active-site Proton donor is Glu-3. Lys-58 (proton donor; for beta-elimination activity) is an active-site residue. His-90, Arg-109, and Arg-152 together coordinate DNA. The segment at 237 to 270 (RVYGREGEPCQCGGVVKRIVQGGRSTFFCPRCQK) adopts an FPG-type zinc-finger fold. Catalysis depends on Arg-260, which acts as the Proton donor; for delta-elimination activity.

Belongs to the FPG family. Monomer. Requires Zn(2+) as cofactor.

The catalysed reaction is Hydrolysis of DNA containing ring-opened 7-methylguanine residues, releasing 2,6-diamino-4-hydroxy-5-(N-methyl)formamidopyrimidine.. It catalyses the reaction 2'-deoxyribonucleotide-(2'-deoxyribose 5'-phosphate)-2'-deoxyribonucleotide-DNA = a 3'-end 2'-deoxyribonucleotide-(2,3-dehydro-2,3-deoxyribose 5'-phosphate)-DNA + a 5'-end 5'-phospho-2'-deoxyribonucleoside-DNA + H(+). Functionally, involved in base excision repair of DNA damaged by oxidation or by mutagenic agents. Acts as a DNA glycosylase that recognizes and removes damaged bases. Has a preference for oxidized purines, such as 7,8-dihydro-8-oxoguanine (8-oxoG). Has AP (apurinic/apyrimidinic) lyase activity and introduces nicks in the DNA strand. Cleaves the DNA backbone by beta-delta elimination to generate a single-strand break at the site of the removed base with both 3'- and 5'-phosphates. This chain is Formamidopyrimidine-DNA glycosylase, found in Novosphingobium aromaticivorans (strain ATCC 700278 / DSM 12444 / CCUG 56034 / CIP 105152 / NBRC 16084 / F199).